The chain runs to 110 residues: Protein YcgL (110 aa).

Positions 14–98 (MFCVIYRSSK…PPEDLLKQHL (85 aa)) constitute a YcgL domain.

In Salmonella arizonae (strain ATCC BAA-731 / CDC346-86 / RSK2980), this protein is Protein YcgL.